The primary structure comprises 184 residues: Gastrokine-2 (184 aa).

The signal sequence occupies residues 1-20 (MKPLVAFLVVLSIFGIQSQA). The region spanning 54–151 (HSGSCSSTTI…LCKHMPLYEG (98 aa)) is the BRICHOS domain. Cys-81 and Cys-143 form a disulfide bridge.

Heterodimer with TFF1; disulfide linked. Interacts with TFF2. As to expression, stomach foveolar epithelium and duodenal Brunner's glands.

The protein resides in the secreted. It is found in the golgi apparatus. The polypeptide is Gastrokine-2 (Gkn2) (Mus musculus (Mouse)).